The chain runs to 482 residues: Kynurenine 3-monooxygenase (482 aa).

This sequence belongs to the aromatic-ring hydroxylase family. KMO subfamily. FAD serves as cofactor.

Its subcellular location is the mitochondrion outer membrane. It catalyses the reaction L-kynurenine + NADPH + O2 + H(+) = 3-hydroxy-L-kynurenine + NADP(+) + H2O. It participates in cofactor biosynthesis; NAD(+) biosynthesis; quinolinate from L-kynurenine: step 1/3. Functionally, catalyzes the hydroxylation of L-kynurenine (L-Kyn) to form 3-hydroxy-L-kynurenine (L-3OHKyn). Required for synthesis of quinolinic acid. The protein is Kynurenine 3-monooxygenase of Phaeosphaeria nodorum (strain SN15 / ATCC MYA-4574 / FGSC 10173) (Glume blotch fungus).